Consider the following 379-residue polypeptide: Chaperone protein DnaJ (379 aa).

One can recognise a J domain in the interval glutamate 5 to glycine 69. The CR-type zinc-finger motif lies at glycine 141–alanine 223. Zn(2+) contacts are provided by cysteine 154, cysteine 157, cysteine 171, cysteine 174, cysteine 197, cysteine 200, cysteine 211, and cysteine 214. CXXCXGXG motif repeat units follow at residues cysteine 154–glycine 161, cysteine 171–glycine 178, cysteine 197–glycine 204, and cysteine 211–glycine 218.

The protein belongs to the DnaJ family. As to quaternary structure, homodimer. Zn(2+) serves as cofactor.

Its subcellular location is the cytoplasm. Its function is as follows. Participates actively in the response to hyperosmotic and heat shock by preventing the aggregation of stress-denatured proteins and by disaggregating proteins, also in an autonomous, DnaK-independent fashion. Unfolded proteins bind initially to DnaJ; upon interaction with the DnaJ-bound protein, DnaK hydrolyzes its bound ATP, resulting in the formation of a stable complex. GrpE releases ADP from DnaK; ATP binding to DnaK triggers the release of the substrate protein, thus completing the reaction cycle. Several rounds of ATP-dependent interactions between DnaJ, DnaK and GrpE are required for fully efficient folding. Also involved, together with DnaK and GrpE, in the DNA replication of plasmids through activation of initiation proteins. In Lactococcus lactis subsp. cremoris (strain MG1363), this protein is Chaperone protein DnaJ.